The following is a 477-amino-acid chain: MDAVELARRLQEEATCSICLDYFTDPVMTACGHNFCRECIQMSWEKGKVKKGKKKQKGSFPCPECREMSPQRNLRPNRLLTKVAEMARQHPGLQKRDLCQAHQEPLKLFCQDDQSPICVVCREAQEHRMHRVLPLDEAAREYKLKLEEDIKYLREEMMKTETLQAKEEQTLTEWQERVKERRERILEEFQKVVLFLVEEERRILQVLKKEEEDTLGKLQDSKASLDHQSRSLDLILLQLEERSQQEPLQMLQDVKDTLNRKESFSVQYPEVVLPAAIKTLCRVPGQIEVLKSFQEDVMPDPSSAYPYLLLYESRQRRYLSPPPEGSAPYSKDRFVAYPCAVGQKSFSSGRHYWEVGMNLTGDALWALGVCRDNVSRKDRVLKSPENGFWVVQLSKGKKQLSLLPNSTLVTLTEPPSHMGIFLDFQAGEVSFYSVNDGSHLHSFSQAAFPGPLLPFFCLGAPKSGQMVISTVTMWVKG.

The RING-type zinc-finger motif lies at 16–66 (CSICLDYFTDPVMTACGHNFCRECIQMSWEKGKVKKGKKKQKGSFPCPECR). Residues 94-135 (QKRDLCQAHQEPLKLFCQDDQSPICVVCREAQEHRMHRVLPL) form a B box-type zinc finger. The Zn(2+) site is built by cysteine 99, histidine 102, cysteine 121, and histidine 127. A coiled-coil region spans residues 135–226 (LDEAAREYKL…KLQDSKASLD (92 aa)). The B30.2/SPRY domain maps to 276-475 (AIKTLCRVPG…MVISTVTMWV (200 aa)).

This sequence belongs to the TRIM/RBCC family. Interacts (via coiled coil) with TRIM44 (via coiled coil). Interacts with TRIM28; this interaction prevents TRIM28 activity on BCL2A1. Interacts with TRIM41; this interaction prevents TRIM41 activity on ZSCAN2. Interacts with BECN1. Interacts with NFATC3 and NFATC4; these interactions prevent NFATC3 and NFATC4 nuclear localization. Auto-ubiquitinated. In terms of tissue distribution, almost exclusively in the testis.

The protein resides in the cytoplasm. The protein localises to the lysosome. The catalysed reaction is S-ubiquitinyl-[E2 ubiquitin-conjugating enzyme]-L-cysteine + [acceptor protein]-L-lysine = [E2 ubiquitin-conjugating enzyme]-L-cysteine + N(6)-ubiquitinyl-[acceptor protein]-L-lysine.. Its pathway is protein modification; protein ubiquitination. In terms of biological role, E3 ubiquitin ligase that plays important roles in the regulation of neuronal apoptosis, selective autophagy or cell proliferation. Stimulates the degradation of kinetochore ZW10 interacting protein ZWINT in a proteasome-dependent manner, leading to negative regulation of cell proliferation. Inhibits autophagic degradation of diverse known targets while contributing to autophagy of midbodies. Autophagy-inhibitory activity involves MCL1, which TRIM17 assembles into complexes with the key autophagy regulator BECN1. Controls neuronal apoptosis by mediating ubiquitination and degradation of MCL1 to initiate neuronal death. In addition, regulates NFAT transcription factors NFATC3 and NFATC4 activities by preventing their nuclear localization, thus inhibiting their transcriptional activities. Decreases TRIM41-mediated degradation of ZSCAN2 thereby stimulating alpha-synuclein/SNCA transcription in neuronal cells. Prevents the E3 ubiquitin-ligase activity of TRIM28 and its interaction with anti-apoptotic BCL2A1, blocking TRIM28 from ubiquitinating BCL2A1. The sequence is that of E3 ubiquitin-protein ligase TRIM17 (Trim17) from Mus musculus (Mouse).